A 510-amino-acid chain; its full sequence is NAD(P)H-quinone oxidoreductase subunit 2, chloroplastic (510 aa).

Transmembrane regions (helical) follow at residues 24–44 (LLLFHGSFIFPECILIFGLIL), 59–79 (WFYFISSTSLVMSITALLFRW), 99–119 (IFQFLILLCSTLCIPLSVEYI), 124–144 (MAITEFLLFVLTATLGGMFLC), 149–169 (LITIFVAPECFSLCSYLLSGY), 183–203 (YLLMGGASSSILVHGFSWLYG), 229–249 (ISIALISITVGIGFKLSPAPF), 295–315 (WHLLLEILAILSMILGNLIAI), 323–343 (MLAYSSIGQIGYVIIGIIVGD), 354–374 (YMLFYISMNLGTFACIVSFGL), 395–415 (ALSLALCLLSLGGLPPLAGFF), 418–438 (LYLFWCGWQAGLYFLVSMGLL), and 484–504 (MTVCVIASTIPGISMNPILAI).

The protein belongs to the complex I subunit 2 family. As to quaternary structure, NDH is composed of at least 16 different subunits, 5 of which are encoded in the nucleus.

It localises to the plastid. The protein resides in the chloroplast thylakoid membrane. It catalyses the reaction a plastoquinone + NADH + (n+1) H(+)(in) = a plastoquinol + NAD(+) + n H(+)(out). It carries out the reaction a plastoquinone + NADPH + (n+1) H(+)(in) = a plastoquinol + NADP(+) + n H(+)(out). NDH shuttles electrons from NAD(P)H:plastoquinone, via FMN and iron-sulfur (Fe-S) centers, to quinones in the photosynthetic chain and possibly in a chloroplast respiratory chain. The immediate electron acceptor for the enzyme in this species is believed to be plastoquinone. Couples the redox reaction to proton translocation, and thus conserves the redox energy in a proton gradient. The sequence is that of NAD(P)H-quinone oxidoreductase subunit 2, chloroplastic from Sisyrinchium montanum (Strict blue-eyed grass).